The sequence spans 621 residues: GPI-anchor transamidase component GPAA1 (621 aa).

Topologically, residues 2–19 (GLLSDPVRRRALARLVLR) are cytoplasmic. The chain crosses the membrane as a helical span at residues 20–41 (LNAPLCVLSYVAGIAWFLALVF). The Lumenal portion of the chain corresponds to 42–370 (PPLTQRTYMS…LLPGLSRFVS (329 aa)). The a 2-acyl-6-[6-phosphoethanolamine-alpha-D-mannosyl-(1-&gt;2)-6-phosphoethanolamine-alpha-D-mannosyl-(1-&gt;6)-2-phosphoethanolamine-alpha-D-mannosyl-(1-&gt;4)-alpha-D-glucosaminyl]-1-(1-radyl,2-acyl-sn-glycero-3-phospho)-1D-myo-inositol site is built by Tyr49 and Ser51. An N-linked (GlcNAc...) asparagine glycan is attached at Asn203. Cys259 and Cys266 are joined by a disulfide. A 2-acyl-6-[6-phosphoethanolamine-alpha-D-mannosyl-(1-&gt;2)-6-phosphoethanolamine-alpha-D-mannosyl-(1-&gt;6)-2-phosphoethanolamine-alpha-D-mannosyl-(1-&gt;4)-alpha-D-glucosaminyl]-1-(1-radyl,2-acyl-sn-glycero-3-phospho)-1D-myo-inositol is bound by residues His354, Gln355, and Ser356. Gln355 is a binding site for Mg(2+). The chain crosses the membrane as a helical span at residues 371–393 (IGLYMPAVGFLLLVLGLKALELW). At 394-425 (MQLHEAGMGLEEPGGAPGPSVPLPPSQGVGLA) the chain is on the cytoplasmic side. A helical transmembrane segment spans residues 426 to 450 (SLVAPLLISQAMGLALYVLPVLGQH). The Lumenal portion of the chain corresponds to 451–462 (VATQHFPVAEAE). Residues 463–483 (AVVLTLLAIYAAGLALPHNTH) traverse the membrane as a helical segment. Topologically, residues 484–495 (RVVSTQAPDRGW) are cytoplasmic. 2 helical membrane-spanning segments follow: residues 496–519 (MALKLVALIYLALQLGCIALTNFS) and 520–536 (LGFLLATTMVPTAALAK). The Cytoplasmic portion of the chain corresponds to 537–540 (PHGP). The helical transmembrane segment at 541 to 563 (RTLYAALLVLTSPAATLLGSLFL) threads the bilayer. Over 564–597 (WRELQEAPLSLAEGWQLFLAALAQGVLEHHTYGA) the chain is Lumenal. Residues 598–619 (LLFPLLSLGLYPCWLLFWNVLF) form a helical membrane-spanning segment. Over 620 to 621 (WK) the chain is Cytoplasmic.

Heteropentamer. Part of the GPI-anchor transamidase complex, consisting of PIGK, PIGT, PIGS, PIGU and GAA1. Interacts with PIGK. As to expression, ubiquitously expressed in fetal and adult tissues. Expressed at higher levels in fetal tissues than adult tissues.

It localises to the endoplasmic reticulum membrane. The protein operates within glycolipid biosynthesis; glycosylphosphatidylinositol-anchor biosynthesis. Functionally, component of the glycosylphosphatidylinositol-anchor (GPI-anchor) transamidase (GPI-T) complex that catalyzes the formation of the linkage between a proprotein and a GPI-anchor and participates in GPI anchored protein biosynthesis. Binds GPI-anchor. The chain is GPI-anchor transamidase component GPAA1 from Homo sapiens (Human).